The primary structure comprises 351 residues: MTEDNPQFNQWYEQDTEVDHLLRDAAANDEEQRSELSLRPQFLREYIGQEALKEELNVYISAAKQREEALDHVLLFGPPGLGKTTLAMIIANEMNVNIKTTSGPAIEKPGDLVALLNELEPGDILFIDEIHRIPTNIEEIMYSAMEDYFVDIMVGQGPTARPVHFPLPPFTLIGATTRPGMLSKPLRDRFGIINSLQYYTPEELQQIVVRTADIFNAPIKSEGAYEISLRSRGTPRIANRLLKRVRDFAQVEGKDAIDKNIVTIGLDKLRVDNRGLDETDHKLLETMIEYYKGGPVGLNTIAANIGEESETLEAMVEPYLLQIGFLQRTPRGRVVTEAGYTHLGHAYQRKL.

Positions 4–199 are large ATPase domain (RuvB-L); sequence DNPQFNQWYE…FGIINSLQYY (196 aa). Residues L38, R39, G80, K83, T84, T85, 146 to 148, R189, Y199, and R236 each bind ATP; that span reads EDY. T84 contacts Mg(2+). A small ATPAse domain (RuvB-S) region spans residues 200–270; it reads TPEELQQIVV…IVTIGLDKLR (71 aa). Positions 273-351 are head domain (RuvB-H); that stretch reads NRGLDETDHK…HLGHAYQRKL (79 aa). Residues R328 and R333 each coordinate DNA.

The protein belongs to the RuvB family. As to quaternary structure, homohexamer. Forms an RuvA(8)-RuvB(12)-Holliday junction (HJ) complex. HJ DNA is sandwiched between 2 RuvA tetramers; dsDNA enters through RuvA and exits via RuvB. An RuvB hexamer assembles on each DNA strand where it exits the tetramer. Each RuvB hexamer is contacted by two RuvA subunits (via domain III) on 2 adjacent RuvB subunits; this complex drives branch migration. In the full resolvosome a probable DNA-RuvA(4)-RuvB(12)-RuvC(2) complex forms which resolves the HJ.

Its subcellular location is the cytoplasm. It catalyses the reaction ATP + H2O = ADP + phosphate + H(+). Its function is as follows. The RuvA-RuvB-RuvC complex processes Holliday junction (HJ) DNA during genetic recombination and DNA repair, while the RuvA-RuvB complex plays an important role in the rescue of blocked DNA replication forks via replication fork reversal (RFR). RuvA specifically binds to HJ cruciform DNA, conferring on it an open structure. The RuvB hexamer acts as an ATP-dependent pump, pulling dsDNA into and through the RuvAB complex. RuvB forms 2 homohexamers on either side of HJ DNA bound by 1 or 2 RuvA tetramers; 4 subunits per hexamer contact DNA at a time. Coordinated motions by a converter formed by DNA-disengaged RuvB subunits stimulates ATP hydrolysis and nucleotide exchange. Immobilization of the converter enables RuvB to convert the ATP-contained energy into a lever motion, pulling 2 nucleotides of DNA out of the RuvA tetramer per ATP hydrolyzed, thus driving DNA branch migration. The RuvB motors rotate together with the DNA substrate, which together with the progressing nucleotide cycle form the mechanistic basis for DNA recombination by continuous HJ branch migration. Branch migration allows RuvC to scan DNA until it finds its consensus sequence, where it cleaves and resolves cruciform DNA. This is Holliday junction branch migration complex subunit RuvB from Leuconostoc mesenteroides subsp. mesenteroides (strain ATCC 8293 / DSM 20343 / BCRC 11652 / CCM 1803 / JCM 6124 / NCDO 523 / NBRC 100496 / NCIMB 8023 / NCTC 12954 / NRRL B-1118 / 37Y).